The primary structure comprises 315 residues: Small ribosomal subunit biogenesis GTPase RsgA (315 aa).

Residues 79–243 (LSKESHILGA…LIDTPGIKGF (165 aa)) enclose the CP-type G domain. Residues 128–131 (NKID) and 182–190 (GHSGVGKSS) contribute to the GTP site. Zn(2+)-binding residues include Cys267, Cys272, His274, and Cys280.

It belongs to the TRAFAC class YlqF/YawG GTPase family. RsgA subfamily. Monomer. Associates with 30S ribosomal subunit, binds 16S rRNA. It depends on Zn(2+) as a cofactor.

The protein localises to the cytoplasm. One of several proteins that assist in the late maturation steps of the functional core of the 30S ribosomal subunit. Helps release RbfA from mature subunits. May play a role in the assembly of ribosomal proteins into the subunit. Circularly permuted GTPase that catalyzes slow GTP hydrolysis, GTPase activity is stimulated by the 30S ribosomal subunit. The sequence is that of Small ribosomal subunit biogenesis GTPase RsgA from Porphyromonas gingivalis (strain ATCC 33277 / DSM 20709 / CIP 103683 / JCM 12257 / NCTC 11834 / 2561).